Here is a 481-residue protein sequence, read N- to C-terminus: Proline--tRNA ligase (481 aa).

This sequence belongs to the class-II aminoacyl-tRNA synthetase family. ProS type 3 subfamily. In terms of assembly, homodimer.

It localises to the cytoplasm. It catalyses the reaction tRNA(Pro) + L-proline + ATP = L-prolyl-tRNA(Pro) + AMP + diphosphate. Functionally, catalyzes the attachment of proline to tRNA(Pro) in a two-step reaction: proline is first activated by ATP to form Pro-AMP and then transferred to the acceptor end of tRNA(Pro). In Chloroherpeton thalassium (strain ATCC 35110 / GB-78), this protein is Proline--tRNA ligase.